A 208-amino-acid chain; its full sequence is Outer-membrane lipoprotein carrier protein (208 aa).

An N-terminal signal peptide occupies residues 1 to 22 (MRKTLSILAISLPLLVSGYAQA).

Belongs to the LolA family. In terms of assembly, monomer.

Its subcellular location is the periplasm. Functionally, participates in the translocation of lipoproteins from the inner membrane to the outer membrane. Only forms a complex with a lipoprotein if the residue after the N-terminal Cys is not an aspartate (The Asp acts as a targeting signal to indicate that the lipoprotein should stay in the inner membrane). The chain is Outer-membrane lipoprotein carrier protein from Shewanella sediminis (strain HAW-EB3).